Reading from the N-terminus, the 516-residue chain is Sodium channel protein Nach (516 aa).

Residues 1–49 are Cytoplasmic-facing; that stretch reads MGHEEELSPEQVDLKVSPLMGSLKRTWNDFCATSSIHGLRYTRDEDTNR. The helical transmembrane segment at 50 to 70 threads the bilayer; sequence IVHFVWLLISLVMFICAVVMA. The Extracellular segment spans residues 71-452; sequence RTFYIDFRSN…LVSNLGSAFS (382 aa). Asn-128, Asn-165, Asn-220, and Asn-348 each carry an N-linked (GlcNAc...) asparagine glycan. A helical membrane pass occupies residues 453-473; the sequence is LFVGMSMLSVVEIMYYFSVIL. Residues 474–516 are Cytoplasmic-facing; it reads RKNYVLECEARKKMLHKGPKFAWPKANDSHSKHQKSVFIIHKM.

This sequence belongs to the amiloride-sensitive sodium channel (TC 1.A.6) family.

It localises to the membrane. Functionally, part of a complex that plays a role in tracheal liquid clearance. Probable role in sodium transport. The chain is Sodium channel protein Nach (Nach) from Drosophila ananassae (Fruit fly).